The sequence spans 479 residues: Glutamate--tRNA ligase (479 aa).

The 'HIGH' region signature appears at 21–31 (PSPTGYLHVGG). A 'KMSKS' region motif is present at residues 248–252 (KLSKR). An ATP-binding site is contributed by lysine 251.

The protein belongs to the class-I aminoacyl-tRNA synthetase family. Glutamate--tRNA ligase type 1 subfamily. In terms of assembly, monomer.

The protein localises to the cytoplasm. It carries out the reaction tRNA(Glu) + L-glutamate + ATP = L-glutamyl-tRNA(Glu) + AMP + diphosphate. Its function is as follows. Catalyzes the attachment of glutamate to tRNA(Glu) in a two-step reaction: glutamate is first activated by ATP to form Glu-AMP and then transferred to the acceptor end of tRNA(Glu). In Haemophilus ducreyi (strain 35000HP / ATCC 700724), this protein is Glutamate--tRNA ligase.